Reading from the N-terminus, the 224-residue chain is Response regulator protein GraR (224 aa).

The Response regulatory domain occupies 2–115 (QILLVEDDNT…VLIAKLQAIY (114 aa)). Residue Asp-51 is modified to 4-aspartylphosphate. Positions 126–224 (KRTLTWQDAV…KVGKGYMAHE (99 aa)) form a DNA-binding region, ompR/PhoB-type. Phosphothreonine is present on residues Thr-128, Thr-130, and Thr-149.

Interacts with GraX. In terms of processing, phosphorylated by GraS. Phosphorylated by Stk1; phosphorylation increases the DNA-binding activity of GraR.

Its subcellular location is the cytoplasm. In terms of biological role, member of the two-component regulatory system GraR/GraS involved in resistance against cationic antimicrobial peptides (CAMPs). Upon phosphorylation by GraS, functions as a transcription regulator by direct binding to promoter regions of target genes such as adhesins, exoproteins, transporters, toxins, and proteins involved in cell wall synthesis. Down-regulates the expression of many genes involved in RNA and amino acid synthesis or glycolysis. This chain is Response regulator protein GraR (graR), found in Staphylococcus aureus (strain Mu50 / ATCC 700699).